A 206-amino-acid polypeptide reads, in one-letter code: Large ribosomal subunit protein mL62 (206 aa).

Residues 1 to 29 (MAAARCLRWGLSRAEAWLLPPPTSCCHRA) constitute a mitochondrion transit peptide. Q90 carries the post-translational modification N5-methylglutamine.

It belongs to the prokaryotic/mitochondrial release factor family. Mitochondrion-specific ribosomal protein mL62 subfamily. As to quaternary structure, component of the mitochondrial ribosome large subunit (39S) which comprises a 16S rRNA and about 50 distinct proteins. Methylation of glutamine in the GGQ triplet by HEMK1.

The protein localises to the mitochondrion. The catalysed reaction is an N-acyl-L-alpha-aminoacyl-tRNA + H2O = an N-acyl-L-amino acid + a tRNA + H(+). Its function is as follows. Essential peptidyl-tRNA hydrolase component of the mitochondrial large ribosomal subunit. Acts as a codon-independent translation release factor that has lost all stop codon specificity and directs the termination of translation in mitochondrion, possibly in case of abortive elongation. May be involved in the hydrolysis of peptidyl-tRNAs that have been prematurely terminated and thus in the recycling of stalled mitochondrial ribosomes. This chain is Large ribosomal subunit protein mL62, found in Bos taurus (Bovine).